A 7785-amino-acid polypeptide reads, in one-letter code: Probable non-canonical nonribosomal peptide synthetase (NRPS) CymA (7785 aa).

Carrier domains lie at threonine 487–glutamate 562, histidine 1908–glutamine 1983, and serine 2958–glycine 3033. Serine 522, serine 1943, and serine 2993 each carry O-(pantetheine 4'-phosphoryl)serine. Residues arginine 3088–asparagine 3111 form an LRR 1 repeat. 3 consecutive Carrier domains span residues alanine 3978–glutamine 4053, glutamate 5002–asparagine 5077, and glycine 6389–serine 6464. O-(pantetheine 4'-phosphoryl)serine occurs at positions 4013, 5037, and 6424. One copy of the LRR 2 repeat lies at threonine 6853–alanine 6875. Residues glycine 7432–glycine 7507 form the Carrier 7 domain. Serine 7467 is subject to O-(pantetheine 4'-phosphoryl)serine.

The cofactor is pantetheine 4'-phosphate.

Its function is as follows. Probable non-canonical nonribosomal peptide synthetase (NRPS); part of the gene cluster that mediates the biosynthesis of cyclic heptapeptides, known as cyclomarins and also of cyclic dipeptides, called cyclomarazines, which have both antimicrobial and cytotoxic effects. First, CymD catalyzes the reverse N-prenylation of monomeric L-tryptophan with dimethylallyl diphosphate (DMAPP) to form N-(1,1-dimethylallyl)-tryptophan (r-N-DMAT). The N-(1,1-dimethylallyl)-tryptophan produced by CymD is then combined with a range of standard and nonproteinogenic amino acid substrates to synthesize the peptides, a process that is probably catalyzed by the non-canonical nonribosomal peptide synthetase (NRPS), CymA. Other proteins in the cluster catalyze further modifications of the peptides including CymV which catalyzes the oxidation of olefinic cyclomarins and cyclomarazines to their respective epoxide derivatives. The protein is Probable non-canonical nonribosomal peptide synthetase (NRPS) CymA of Salinispora arenicola (strain CNS-205).